The sequence spans 232 residues: Octanoyltransferase (232 aa).

Residues 44 to 219 (EHTADEVWVV…QLARQFGLVL (176 aa)) form the BPL/LPL catalytic domain. Substrate-binding positions include 83 to 90 (RGGQVTYH), 150 to 152 (ALG), and 163 to 165 (GLS). The active-site Acyl-thioester intermediate is Cys181.

The protein belongs to the LipB family.

It is found in the cytoplasm. It catalyses the reaction octanoyl-[ACP] + L-lysyl-[protein] = N(6)-octanoyl-L-lysyl-[protein] + holo-[ACP] + H(+). It participates in protein modification; protein lipoylation via endogenous pathway; protein N(6)-(lipoyl)lysine from octanoyl-[acyl-carrier-protein]: step 1/2. Its function is as follows. Catalyzes the transfer of endogenously produced octanoic acid from octanoyl-acyl-carrier-protein onto the lipoyl domains of lipoate-dependent enzymes. Lipoyl-ACP can also act as a substrate although octanoyl-ACP is likely to be the physiological substrate. In Xanthomonas euvesicatoria pv. vesicatoria (strain 85-10) (Xanthomonas campestris pv. vesicatoria), this protein is Octanoyltransferase.